A 446-amino-acid chain; its full sequence is White-opaque regulator 2 (446 aa).

Polar residues predominate over residues 1 to 24 (MTQLPSVSELINRTGSIGSSSNIT). Residues 1 to 203 (MTQLPSVSEL…QPNFPYHNNF (203 aa)) form a disordered region. Positions 30–64 (TTTSATNTTTAATATTVTSTTPRSENSYSPNSPYS) are enriched in low complexity. The segment covering 67 to 86 (TRPSNTSLTNYSAGSGITVA) has biased composition (polar residues). 2 stretches are compositionally biased toward low complexity: residues 87–97 (SSSFQFSQPSP) and 104–120 (STSS…QHQS). Over residues 121–144 (NPSGVSMSSNTSPRTSIVQSMSSV) the composition is skewed to polar residues. Positions 166 to 184 (VQPPPQQQQLQQPPPPPPQ) are enriched in pro residues. The segment covering 185–195 (QQQHIYPQQQP) has biased composition (low complexity). Residues 305–332 (CLTCRKRRIKCDERKPTCFNCERSKKSC) constitute a DNA-binding region (zn(2)-C6 fungal-type). The segment at 336-402 (QDLSKLPPRK…SGSSTNSRNL (67 aa)) is disordered. Positions 358–369 (NQQQQQQQQNQQ) are enriched in low complexity. Positions 387–401 (HQITSISGSSTNSRN) are enriched in polar residues.

Its subcellular location is the nucleus. Functionally, transcriptional regulator of the switch between 2 heritable states, the white and opaque states. These 2 cell types differ in many characteristics, including cell structure, mating competence, and virulence. Each state is heritable for many generations, and switching between states occurs stochastically, at low frequency. WOR2 is necessary for the stability of the opaque state phenotypic switching from the white to the opaque phase is a necessary step for mating. Plays a role in cell adhesion and pseudohyphal growth. The polypeptide is White-opaque regulator 2 (WOR2) (Candida albicans (strain SC5314 / ATCC MYA-2876) (Yeast)).